A 270-amino-acid chain; its full sequence is tRNA pseudouridine synthase A (270 aa).

The active-site Nucleophile is aspartate 60. Tyrosine 118 is a substrate binding site.

This sequence belongs to the tRNA pseudouridine synthase TruA family. Homodimer.

It catalyses the reaction uridine(38/39/40) in tRNA = pseudouridine(38/39/40) in tRNA. Functionally, formation of pseudouridine at positions 38, 39 and 40 in the anticodon stem and loop of transfer RNAs. The sequence is that of tRNA pseudouridine synthase A from Salmonella typhimurium (strain LT2 / SGSC1412 / ATCC 700720).